We begin with the raw amino-acid sequence, 353 residues long: Nicotinate-nucleotide--dimethylbenzimidazole phosphoribosyltransferase (353 aa).

The active-site Proton acceptor is the Glu318.

The protein belongs to the CobT family.

The catalysed reaction is 5,6-dimethylbenzimidazole + nicotinate beta-D-ribonucleotide = alpha-ribazole 5'-phosphate + nicotinate + H(+). It functions in the pathway nucleoside biosynthesis; alpha-ribazole biosynthesis; alpha-ribazole from 5,6-dimethylbenzimidazole: step 1/2. Its function is as follows. Catalyzes the synthesis of alpha-ribazole-5'-phosphate from nicotinate mononucleotide (NAMN) and 5,6-dimethylbenzimidazole (DMB). This chain is Nicotinate-nucleotide--dimethylbenzimidazole phosphoribosyltransferase, found in Roseiflexus sp. (strain RS-1).